The following is a 478-amino-acid chain: UDP-glycosyltransferase 71B5 (478 aa).

Residues serine 280, alanine 347–glutamine 349, histidine 364–glutamate 372, and tyrosine 386–glutamine 389 contribute to the UDP-alpha-D-glucose site.

This sequence belongs to the UDP-glycosyltransferase family.

Its function is as follows. Possesses low quercetin 3-O-glucosyltransferase activity in vitro. This chain is UDP-glycosyltransferase 71B5 (UGT71B5), found in Arabidopsis thaliana (Mouse-ear cress).